The following is a 216-amino-acid chain: MTRLVLGSASSGRLKVLQQAGVDPLVVVSGVDEDAIMAGLGPAATPADVVRVLARAKAEQVATTLTGQQASVAADCLVIGCDSMLYIDGRLCGKPETVDDARQLWRSMAGRCGHLYTGHSVVRLTEQRVTHRDDETSTTTVHFAAPSDDDLEAYLATGESLKVAGGFTLDGLGGWFITGVEGDPSAVVGIGLPLTRDLISRAGISIAALWASNPLP.

The active-site Proton acceptor is the D82.

It belongs to the Maf family. It depends on a divalent metal cation as a cofactor.

The protein localises to the cytoplasm. The enzyme catalyses a ribonucleoside 5'-triphosphate + H2O = a ribonucleoside 5'-phosphate + diphosphate + H(+). The catalysed reaction is a 2'-deoxyribonucleoside 5'-triphosphate + H2O = a 2'-deoxyribonucleoside 5'-phosphate + diphosphate + H(+). Its function is as follows. Nucleoside triphosphate pyrophosphatase. May have a dual role in cell division arrest and in preventing the incorporation of modified nucleotides into cellular nucleic acids. The polypeptide is Nucleoside triphosphate pyrophosphatase (Mycobacterium ulcerans (strain Agy99)).